We begin with the raw amino-acid sequence, 88 residues long: Small ribosomal subunit protein bS20 (88 aa).

Disordered regions lie at residues 1-23 (MANT…VNKA) and 65-88 (GVMH…SLSA).

This sequence belongs to the bacterial ribosomal protein bS20 family.

Binds directly to 16S ribosomal RNA. This chain is Small ribosomal subunit protein bS20, found in Rhizobium meliloti (strain 1021) (Ensifer meliloti).